The sequence spans 263 residues: 4-hydroxy-2-oxo-heptane-1,7-dioate aldolase (263 aa).

The active-site Proton acceptor is H45. Q147 provides a ligand contact to substrate. E149 contacts a divalent metal cation. Substrate contacts are provided by A174 and D175. An a divalent metal cation-binding site is contributed by D175.

The protein belongs to the HpcH/HpaI aldolase family. Homohexamer; trimer of dimers. It depends on a divalent metal cation as a cofactor.

It catalyses the reaction 4-hydroxy-2-oxoheptanedioate = succinate semialdehyde + pyruvate. It functions in the pathway aromatic compound metabolism; 4-hydroxyphenylacetate degradation; pyruvate and succinate semialdehyde from 4-hydroxyphenylacetate: step 7/7. In terms of biological role, catalyzes the reversible retro-aldol cleavage of 4-hydroxy-2-ketoheptane-1,7-dioate (HKHD) to pyruvate and succinic semialdehyde. This is 4-hydroxy-2-oxo-heptane-1,7-dioate aldolase from Salmonella newport (strain SL254).